The primary structure comprises 150 residues: D-aminoacyl-tRNA deacylase (150 aa).

Residues 136–137 (GP) carry the Gly-cisPro motif, important for rejection of L-amino acids motif.

Belongs to the DTD family. As to quaternary structure, homodimer.

It localises to the cytoplasm. The enzyme catalyses glycyl-tRNA(Ala) + H2O = tRNA(Ala) + glycine + H(+). It carries out the reaction a D-aminoacyl-tRNA + H2O = a tRNA + a D-alpha-amino acid + H(+). Functionally, an aminoacyl-tRNA editing enzyme that deacylates mischarged D-aminoacyl-tRNAs. Also deacylates mischarged glycyl-tRNA(Ala), protecting cells against glycine mischarging by AlaRS. Acts via tRNA-based rather than protein-based catalysis; rejects L-amino acids rather than detecting D-amino acids in the active site. By recycling D-aminoacyl-tRNA to D-amino acids and free tRNA molecules, this enzyme counteracts the toxicity associated with the formation of D-aminoacyl-tRNA entities in vivo and helps enforce protein L-homochirality. The sequence is that of D-aminoacyl-tRNA deacylase from Macrococcus caseolyticus (strain JCSC5402) (Macrococcoides caseolyticum).